A 211-amino-acid chain; its full sequence is Large ribosomal subunit protein eL13 (211 aa).

Position 16 is an N6-acetyllysine (Lys16). Phosphoserine occurs at positions 52, 77, and 106. Glycyl lysine isopeptide (Lys-Gly) (interchain with G-Cter in SUMO2) cross-links involve residues Lys123 and Lys145. Lys174 is covalently cross-linked (Glycyl lysine isopeptide (Lys-Gly) (interchain with G-Cter in SUMO1); alternate). Glycyl lysine isopeptide (Lys-Gly) (interchain with G-Cter in SUMO2); alternate cross-links involve residues Lys174 and Lys177. Lys177 carries the post-translational modification N6-acetyllysine; alternate.

It belongs to the eukaryotic ribosomal protein eL13 family. Component of the 60S large ribosomal subunit (LSU).

The protein localises to the cytoplasm. In terms of biological role, component of the ribosome, a large ribonucleoprotein complex responsible for the synthesis of proteins in the cell. The small ribosomal subunit (SSU) binds messenger RNAs (mRNAs) and translates the encoded message by selecting cognate aminoacyl-transfer RNA (tRNA) molecules. The large subunit (LSU) contains the ribosomal catalytic site termed the peptidyl transferase center (PTC), which catalyzes the formation of peptide bonds, thereby polymerizing the amino acids delivered by tRNAs into a polypeptide chain. The nascent polypeptides leave the ribosome through a tunnel in the LSU and interact with protein factors that function in enzymatic processing, targeting, and the membrane insertion of nascent chains at the exit of the ribosomal tunnel. As part of the LSU, it is probably required for its formation and the maturation of rRNAs. Plays a role in bone development. In Rattus norvegicus (Rat), this protein is Large ribosomal subunit protein eL13 (Rpl13).